Reading from the N-terminus, the 342-residue chain is Holliday junction branch migration complex subunit RuvB (342 aa).

The segment at 4-182 is large ATPase domain (RuvB-L); that stretch reads TDRLLSAGRR…FGIPIRLQFY (179 aa). ATP contacts are provided by leucine 21, arginine 22, glycine 63, lysine 66, threonine 67, threonine 68, arginine 172, tyrosine 182, and arginine 219. Threonine 67 serves as a coordination point for Mg(2+). Positions 183–253 are small ATPAse domain (RuvB-S); sequence TVEELERVVS…VADQSLNRLE (71 aa). The segment at 256-342 is head domain (RuvB-H); sequence NLGLDAMDRR…EAGQDGLFDV (87 aa). The DNA site is built by arginine 292, arginine 311, and arginine 316.

It belongs to the RuvB family. Homohexamer. Forms an RuvA(8)-RuvB(12)-Holliday junction (HJ) complex. HJ DNA is sandwiched between 2 RuvA tetramers; dsDNA enters through RuvA and exits via RuvB. An RuvB hexamer assembles on each DNA strand where it exits the tetramer. Each RuvB hexamer is contacted by two RuvA subunits (via domain III) on 2 adjacent RuvB subunits; this complex drives branch migration. In the full resolvosome a probable DNA-RuvA(4)-RuvB(12)-RuvC(2) complex forms which resolves the HJ.

The protein localises to the cytoplasm. It carries out the reaction ATP + H2O = ADP + phosphate + H(+). Functionally, the RuvA-RuvB-RuvC complex processes Holliday junction (HJ) DNA during genetic recombination and DNA repair, while the RuvA-RuvB complex plays an important role in the rescue of blocked DNA replication forks via replication fork reversal (RFR). RuvA specifically binds to HJ cruciform DNA, conferring on it an open structure. The RuvB hexamer acts as an ATP-dependent pump, pulling dsDNA into and through the RuvAB complex. RuvB forms 2 homohexamers on either side of HJ DNA bound by 1 or 2 RuvA tetramers; 4 subunits per hexamer contact DNA at a time. Coordinated motions by a converter formed by DNA-disengaged RuvB subunits stimulates ATP hydrolysis and nucleotide exchange. Immobilization of the converter enables RuvB to convert the ATP-contained energy into a lever motion, pulling 2 nucleotides of DNA out of the RuvA tetramer per ATP hydrolyzed, thus driving DNA branch migration. The RuvB motors rotate together with the DNA substrate, which together with the progressing nucleotide cycle form the mechanistic basis for DNA recombination by continuous HJ branch migration. Branch migration allows RuvC to scan DNA until it finds its consensus sequence, where it cleaves and resolves cruciform DNA. This Rhizorhabdus wittichii (strain DSM 6014 / CCUG 31198 / JCM 15750 / NBRC 105917 / EY 4224 / RW1) (Sphingomonas wittichii) protein is Holliday junction branch migration complex subunit RuvB.